The sequence spans 622 residues: Leucine-rich repeat-containing protein 70 (622 aa).

The signal sequence occupies residues 1–31 (MCGLQFSLPCLRLFLVVTCYLLLLLHKEILG). An LRRNT domain is found at 32 to 60 (CSSVCQLCTGRQINCRNLGLSSIPKNFPE). LRR repeat units lie at residues 61–82 (STVF…ELTG), 85–106 (SLVA…AFVQ), 109–130 (HLYF…IFKG), 133–154 (NLRN…VFND), 157–178 (SVQY…TFVG), 181–202 (ALRI…GFQH), 205–226 (NLAC…AFEV), 229–250 (SLRR…AFKG), 253–274 (NLEY…GFSG), 277–298 (NLKH…TFSL), 301–322 (NLIY…TFEN), and 326–347 (SLKI…VLKP). N-linked (GlcNAc...) asparagine glycosylation occurs at Asn-215. Asn-266 is a glycosylation site (N-linked (GlcNAc...) asparagine). Asn-331 and Asn-400 each carry an N-linked (GlcNAc...) asparagine glycan. Residues 359–406 (NPWECNCKLLGLRDWLASSAITLNIYCQNPPSMRGRALRYINITNCVT) form the LRRCT domain. A helical membrane pass occupies residues 527–547 (AFDILLAFFILACVLIIFLIY).

As to expression, expressed at low levels in many tissues, including smooth muscle, brain, uterus, pancreas, cartilage, adipose, spleen and testis.

It is found in the membrane. Its function is as follows. Renders cells highly sensitive to the activation by cytokines and lipopolysaccharide (LPS). In Homo sapiens (Human), this protein is Leucine-rich repeat-containing protein 70 (LRRC70).